Here is a 345-residue protein sequence, read N- to C-terminus: D-fructose 1,6-bisphosphatase class 2/sedoheptulose 1,7-bisphosphatase (345 aa).

D33, E57, D97, and E100 together coordinate Mn(2+). Residues 100 to 102 (EGT), Y131, 176 to 178 (RDR), and 198 to 200 (DGD) contribute to the substrate site. A Mn(2+)-binding site is contributed by E225.

It belongs to the FBPase class 2 family. Homotetramer. Mn(2+) is required as a cofactor.

It catalyses the reaction beta-D-fructose 1,6-bisphosphate + H2O = beta-D-fructose 6-phosphate + phosphate. The catalysed reaction is D-sedoheptulose 1,7-bisphosphate + H2O = D-sedoheptulose 7-phosphate + phosphate. It functions in the pathway carbohydrate biosynthesis; Calvin cycle. Its function is as follows. Catalyzes the hydrolysis of fructose 1,6-bisphosphate (Fru 1,6-P2) and sedoheptulose 1,7-bisphosphate (Sed 1,7-P2) to fructose 6-phosphate and sedoheptulose 7-phosphate, respectively. In Nostoc sp. (strain PCC 7120 / SAG 25.82 / UTEX 2576), this protein is D-fructose 1,6-bisphosphatase class 2/sedoheptulose 1,7-bisphosphatase.